Reading from the N-terminus, the 386-residue chain is MSKNYLFTSESVSEGHPDKLADQISDAILDEILKQDKNARVACETLVKTGMALVAGEITTSAWVDIKELVRNVITETGYDNASKGIDGRTCSVINAIDKQSRDITQGVDRGSLEDLGAGDQGLMFGFATNETPTLMPSAIYYSHLLMRKQAELRKSGKLAWLRPDAKAQVTLAYENDKPKFIDTIVLSTQHNESISQKELHDAVIEEIVKKVIPNELITKDTKYHINPTGVFLIGGPQGDCGLTGRKIIVDTYGGAAHHGGGAFSGKDPSKVDRSGAYMGRYIAKNIVAAGLADKCEVQVAYAIGVAKPVSLMVNTFGTGKITDNQIEKLVAEVFDLRVGKIIENLDLLRPIYRKTSNYGHFGRELPEFTWEKIDKADILKSAARI.

Residue His-16 coordinates ATP. Asp-18 lines the Mg(2+) pocket. Glu-44 serves as a coordination point for K(+). The L-methionine site is built by Glu-57 and Gln-100. Residues 100–110 form a flexible loop region; the sequence is QSRDITQGVDR. Residues 165–167, Asp-240, 246–247, Ala-263, and Lys-267 contribute to the ATP site; these read DAK and RK. Asp-240 contributes to the L-methionine binding site. Residue Lys-271 participates in L-methionine binding.

It belongs to the AdoMet synthase family. As to quaternary structure, homotetramer; dimer of dimers. Requires Mg(2+) as cofactor. K(+) serves as cofactor.

It is found in the cytoplasm. It carries out the reaction L-methionine + ATP + H2O = S-adenosyl-L-methionine + phosphate + diphosphate. The protein operates within amino-acid biosynthesis; S-adenosyl-L-methionine biosynthesis; S-adenosyl-L-methionine from L-methionine: step 1/1. Its function is as follows. Catalyzes the formation of S-adenosylmethionine (AdoMet) from methionine and ATP. The overall synthetic reaction is composed of two sequential steps, AdoMet formation and the subsequent tripolyphosphate hydrolysis which occurs prior to release of AdoMet from the enzyme. The polypeptide is S-adenosylmethionine synthase (Francisella tularensis subsp. tularensis (strain WY96-3418)).